The sequence spans 943 residues: Glycine dehydrogenase (decarboxylating) (943 aa).

Lysine 695 is subject to N6-(pyridoxal phosphate)lysine.

The protein belongs to the GcvP family. The glycine cleavage system is composed of four proteins: P, T, L and H. It depends on pyridoxal 5'-phosphate as a cofactor.

The catalysed reaction is N(6)-[(R)-lipoyl]-L-lysyl-[glycine-cleavage complex H protein] + glycine + H(+) = N(6)-[(R)-S(8)-aminomethyldihydrolipoyl]-L-lysyl-[glycine-cleavage complex H protein] + CO2. The glycine cleavage system catalyzes the degradation of glycine. The P protein binds the alpha-amino group of glycine through its pyridoxal phosphate cofactor; CO(2) is released and the remaining methylamine moiety is then transferred to the lipoamide cofactor of the H protein. The protein is Glycine dehydrogenase (decarboxylating) of Jannaschia sp. (strain CCS1).